A 197-amino-acid polypeptide reads, in one-letter code: MLERIKDSFTESIQTKIDAAEALPESIAKAAEMMVHCLLGGNKILACGNGGSAGDAQHFSAELLNRYEIERPPLPAIALSTDTSTITAIANDYSYDEIFSKQIFALGQPGDILLAISTSGNSGNVIKAMEAALSRDMTIVALTGKDGGAMAGLLSVGDVEIRVPSNVTARIQEVHLLVIHCLCDNIDRTLFPQDEQQ.

The region spanning 34–196 (MVHCLLGGNK…DRTLFPQDEQ (163 aa)) is the SIS domain. 49–51 (NGG) contacts substrate. Zn(2+) contacts are provided by His-58 and Glu-62. Substrate is bound by residues Glu-62, 91–92 (ND), 117–119 (STS), Ser-122, and Gln-172. The Zn(2+) site is built by Gln-172 and His-180.

The protein belongs to the SIS family. GmhA subfamily. In terms of assembly, homotetramer. The cofactor is Zn(2+).

The protein localises to the cytoplasm. The enzyme catalyses 2 D-sedoheptulose 7-phosphate = D-glycero-alpha-D-manno-heptose 7-phosphate + D-glycero-beta-D-manno-heptose 7-phosphate. It participates in carbohydrate biosynthesis; D-glycero-D-manno-heptose 7-phosphate biosynthesis; D-glycero-alpha-D-manno-heptose 7-phosphate and D-glycero-beta-D-manno-heptose 7-phosphate from sedoheptulose 7-phosphate: step 1/1. Functionally, catalyzes the isomerization of sedoheptulose 7-phosphate in D-glycero-D-manno-heptose 7-phosphate. The protein is Phosphoheptose isomerase of Shewanella baltica (strain OS223).